The chain runs to 397 residues: MVIKPRVRGFICVTAHPTGCEVNVKQQIDYVKAQGPFHGPKRVLVIGASTGYGLAARISAAFASGAATVGVFLERPGEGNKPGTAGWYNSAAFHKFAEAEGLYASSVNGDAFSDAVKQQTIDIIKRDLGQVDLVVYSLAAPRRTHPKTGQVYNSTLKPIGKTLRQRGLDTDKEVIKENVIEPATEEEIANTVAVMGGEDWQMWIEALDQAGVLADGAKTTAFTYLGEKITHDIYWNGTIGAAKKDLDQRVLKIREQLAARGGDARVAVLKALVTQASSAIPMMPLYLSLLFKVMKKAGTHEGCIEQVDGLYRDSLYNDHPIMDEEGRLRADYKELAPDIQAEVAALWDQVTDENLYELTDFKGYKSDFLRLFGFGVEGVDYEADVNPEVPIRNLTQV.

NAD(+) contacts are provided by residues 47 to 52 (GASTGY), 73 to 74 (LE), 110 to 111 (DA), and 138 to 139 (LA). Tyr-224 is a binding site for substrate. Tyr-234 (proton donor) is an active-site residue. Residues Lys-243 and 272-274 (LVT) each bind NAD(+).

It belongs to the TER reductase family. As to quaternary structure, monomer.

The enzyme catalyses a 2,3-saturated acyl-[ACP] + NAD(+) = a (2E)-enoyl-[ACP] + NADH + H(+). It participates in lipid metabolism; fatty acid biosynthesis. In terms of biological role, involved in the final reduction of the elongation cycle of fatty acid synthesis (FAS II). Catalyzes the reduction of a carbon-carbon double bond in an enoyl moiety that is covalently linked to an acyl carrier protein (ACP). The protein is Enoyl-[acyl-carrier-protein] reductase [NADH] of Methylobacillus flagellatus (strain ATCC 51484 / DSM 6875 / VKM B-1610 / KT).